The sequence spans 296 residues: 4-hydroxy-tetrahydrodipicolinate synthase (296 aa).

Residue Thr-44 participates in pyruvate binding. Catalysis depends on Tyr-132, which acts as the Proton donor/acceptor. The Schiff-base intermediate with substrate role is filled by Lys-162. Ile-204 lines the pyruvate pocket.

It belongs to the DapA family. Homotetramer; dimer of dimers.

It is found in the cytoplasm. The enzyme catalyses L-aspartate 4-semialdehyde + pyruvate = (2S,4S)-4-hydroxy-2,3,4,5-tetrahydrodipicolinate + H2O + H(+). The protein operates within amino-acid biosynthesis; L-lysine biosynthesis via DAP pathway; (S)-tetrahydrodipicolinate from L-aspartate: step 3/4. Its function is as follows. Catalyzes the condensation of (S)-aspartate-beta-semialdehyde [(S)-ASA] and pyruvate to 4-hydroxy-tetrahydrodipicolinate (HTPA). In Novosphingobium aromaticivorans (strain ATCC 700278 / DSM 12444 / CCUG 56034 / CIP 105152 / NBRC 16084 / F199), this protein is 4-hydroxy-tetrahydrodipicolinate synthase.